Here is a 229-residue protein sequence, read N- to C-terminus: Ribonuclease 3 (229 aa).

Residues 5–134 (EQKLEQDFGI…FLGALYLDQG (130 aa)) enclose the RNase III domain. Glu47 provides a ligand contact to Mg(2+). Residue Asp51 is part of the active site. 2 residues coordinate Mg(2+): Asp120 and Glu123. Glu123 is a catalytic residue. The region spanning 160–229 (DYKTALQERL…AKSALEQLGN (70 aa)) is the DRBM domain.

It belongs to the ribonuclease III family. As to quaternary structure, homodimer. Mg(2+) is required as a cofactor.

Its subcellular location is the cytoplasm. It catalyses the reaction Endonucleolytic cleavage to 5'-phosphomonoester.. Digests double-stranded RNA. Involved in the processing of primary rRNA transcript to yield the immediate precursors to the large and small rRNAs (23S and 16S). Also processes some mRNAs, and tRNAs when they are encoded in the rRNA operon. Its function is as follows. CRISPR (clustered regularly interspaced short palindromic repeat) is an adaptive immune system that provides protection against mobile genetic elements (viruses, transposable elements and conjugative plasmids). CRISPR clusters contain spacers, sequences complementary to antecedent mobile elements, and target invading nucleic acids. CRISPR clusters are transcribed and processed into CRISPR RNA (crRNA). In this organism endogenous ribonuclease 3 and Cas9 are required for correct coprocessing of pre-crRNA and the trans-encoded small RNA (tracrRNA). Cas9, crRNA and tracrRNA are required for cleavage of invading DNA. Complements pre-crRNA and tracRNA coprocessing defects in an rnc deletion in S.pyogenes strain 370. The polypeptide is Ribonuclease 3 (Streptococcus thermophilus (strain ATCC BAA-491 / LMD-9)).